A 339-amino-acid polypeptide reads, in one-letter code: Ferredoxin--NADP reductase (339 aa).

Residues D36, Q44, Y49, V89, F123, D290, and T331 each contribute to the FAD site.

Belongs to the ferredoxin--NADP reductase type 2 family. As to quaternary structure, homodimer. Requires FAD as cofactor.

It carries out the reaction 2 reduced [2Fe-2S]-[ferredoxin] + NADP(+) + H(+) = 2 oxidized [2Fe-2S]-[ferredoxin] + NADPH. This Acidiphilium cryptum (strain JF-5) protein is Ferredoxin--NADP reductase.